Here is a 451-residue protein sequence, read N- to C-terminus: Ribulose bisphosphate carboxylase large chain (451 aa).

Lys-5 carries the post-translational modification N6,N6,N6-trimethyllysine. Substrate is bound by residues Asn-114 and Thr-164. Lys-166 serves as the catalytic Proton acceptor. Lys-168 is a substrate binding site. Lys-192, Asp-194, and Glu-195 together coordinate Mg(2+). Lys-192 carries the post-translational modification N6-carboxylysine. Catalysis depends on His-285, which acts as the Proton acceptor. Residues Arg-286, His-318, and Ser-370 each coordinate substrate.

Belongs to the RuBisCO large chain family. Type I subfamily. In terms of assembly, heterohexadecamer of 8 large chains and 8 small chains; disulfide-linked. The disulfide link is formed within the large subunit homodimers. Mg(2+) is required as a cofactor. In terms of processing, the disulfide bond which can form in the large chain dimeric partners within the hexadecamer appears to be associated with oxidative stress and protein turnover.

The protein localises to the plastid. It is found in the chloroplast. The enzyme catalyses 2 (2R)-3-phosphoglycerate + 2 H(+) = D-ribulose 1,5-bisphosphate + CO2 + H2O. It carries out the reaction D-ribulose 1,5-bisphosphate + O2 = 2-phosphoglycolate + (2R)-3-phosphoglycerate + 2 H(+). Functionally, ruBisCO catalyzes two reactions: the carboxylation of D-ribulose 1,5-bisphosphate, the primary event in carbon dioxide fixation, as well as the oxidative fragmentation of the pentose substrate in the photorespiration process. Both reactions occur simultaneously and in competition at the same active site. This Aristea glauca protein is Ribulose bisphosphate carboxylase large chain.